The sequence spans 409 residues: Argininosuccinate synthase (409 aa).

Residues A8–S16 and A34 each bind ATP. Y85 contributes to the L-citrulline binding site. G115 is an ATP binding site. L-aspartate contacts are provided by T117, N121, and D122. N121 provides a ligand contact to L-citrulline. The L-citrulline site is built by R125, S178, S187, E268, and Y280.

Belongs to the argininosuccinate synthase family. Type 1 subfamily. As to quaternary structure, homotetramer.

It localises to the cytoplasm. It carries out the reaction L-citrulline + L-aspartate + ATP = 2-(N(omega)-L-arginino)succinate + AMP + diphosphate + H(+). It participates in amino-acid biosynthesis; L-arginine biosynthesis; L-arginine from L-ornithine and carbamoyl phosphate: step 2/3. The polypeptide is Argininosuccinate synthase (Thermotoga petrophila (strain ATCC BAA-488 / DSM 13995 / JCM 10881 / RKU-1)).